The following is a 625-amino-acid chain: Glucose dehydrogenase [FAD, quinone] (625 aa).

The N-terminal stretch at 1-42 (MSASASACDCLVGVPTGPTLASTCGGSAFMLFMGLLEVFIRS) is a signal peptide. An FAD-binding site is contributed by 66–95 (DFIVIGGGSAGSVVASRLSEVPQWKVLLIE). Catalysis depends on histidine 544, which acts as the Proton acceptor. A non-standard amino acid (selenocysteine) is located at residue selenocysteine 613.

This sequence belongs to the GMC oxidoreductase family. FAD serves as cofactor.

It is found in the secreted. It catalyses the reaction a quinone + D-glucose = D-glucono-1,5-lactone + a quinol. Essential for cuticular modification during development. In Drosophila melanogaster (Fruit fly), this protein is Glucose dehydrogenase [FAD, quinone] (Gld).